We begin with the raw amino-acid sequence, 1374 residues long: MDKQPVLEPTFDSVSERENTSIEESSLLENNGFDHRNKDESLSVNTSPPLVCRKCFELGHQTENCKQKLTVNSENNSAQNEKEKVLPENPRARSNFISSLCFWYTIPIFRKGYRKTLDSTDLYRPLEEQKSDILGNRLCASWERELKNDGRSPSLVRALLRVFGWQLGFPGLAIFVVELGLRTLQPIFLVKLISYFSGEPDAANAGFYYAVAQIVISALTVMILTPTTFGIHHVCFKMRVAMGSMIFRKALRLTKGALGDTTSGHVVNLISNDIPRLDSAPYTVHYLWVGPLQVLVITYLMYQEIGISAVFGVLFMLLFMPIQMYLGTRTSAIQLKAAERTDNRIRMVNEIISAIQVLKMYAWEQPFEQMVTHAREKEMNTIRQGQYIRGFDFARRIVLSRVAIFLSLVGYVILGKVFTPEIAFMITAYYNVLLAAMSIYVPSAIIQTAQFLTSIRRVEQFMQSEELGSSDKSEGPSKDTVPGNPPSNNNEADLLKSAISIRDLKAKWDPNSPDYTLSGINLEIKPGSVVAVIGLTGSGKSSLIQAILGELKANSGQLQVNGSLSYTSQESWLFSGTVRQNILFGQPMDSQRYEEVVKKCALERDFDLLPLRDNTIVGERGATLSGGQKARISLARSVYRKASIYLLDDPLSAVDASVARHLFDQCVRGHLRGSTVVLVTHQEQFLPHVDQIVILANGQIKALGDYESLLKTGLITGLGSLSKTDKAKTEEQEPLNLNSPDNKNEVTPIKENSEQTVGGSSSGKEHVERQESGGISLALYRKYFQAGGGLVAFLVMLSSSVLAQVAVTGGDYFLTYWVKKESTAAGHGEMEDMESKSMDVYKYTLIIILSVIMNLSSSFLLFNIAKKASIRLHNTIFNRVTRADMHFFSINKHGSILNRFTKDMSQVDEVLPVVLVDVMQIALWLAGIIIVIANVNPLLLVPTLMLSVIFYHLRNLYLKTSRDLKRVEAINRSPVYSHLAASLNGLTTIRALDAQRVLEKEFDSYQDAHSSAFFMYISTSQAFGYCMNCICVIYISIITLSFFAFPPGNGADVGLVITQAMGLIDMVQWGVRQTAELENTMTAVERVVEYESIEPEGMLEAPDDKKPPKTWPEQGEIIFKELNLRYTPNAKAENVLKSLSFVIQPREKVGIVGRTGAGKSSLINALFRLSYTDGSVLIDTRDTRQMGLHDLRRQISIIPQEPVLFSGTMRYNLDPFDEYSDEKLWGCLEEVKLKEVVSDLPDGLASKISEGGTNFSVGQRQLVCLARAILRENRILVMDEATANVDPQTDGLIQATIRSKFRDCTVLTIAHRLHTIIDSDKVMVMDAGRVVEFGSPYELMTKSDSKVFHNLVNQSGRASYEGLLKIAQETFESS.

A disordered region spans residues 1–40; the sequence is MDKQPVLEPTFDSVSERENTSIEESSLLENNGFDHRNKDE. Transmembrane regions (helical) follow at residues 159–179, 205–225, 282–302, 305–325, 404–424, and 426–446; these read LLRV…VVEL, AGFY…MILT, YTVH…YLMY, IGIS…IQMY, IFLS…EIAF, and ITAY…SAII. The ABC transmembrane type-1 1 domain occupies 168–449; the sequence is GFPGLAIFVV…YVPSAIIQTA (282 aa). Residues 466-492 are disordered; that stretch reads ELGSSDKSEGPSKDTVPGNPPSNNNEA. One can recognise an ABC transporter 1 domain in the interval 499–722; the sequence is ISIRDLKAKW…GLITGLGSLS (224 aa). Residue 534-541 participates in ATP binding; sequence GLTGSGKS. A glycan (N-linked (GlcNAc...) asparagine) is linked at Asn561. The tract at residues 723 to 766 is disordered; sequence KTDKAKTEEQEPLNLNSPDNKNEVTPIKENSEQTVGGSSSGKEH. Transmembrane regions (helical) follow at residues 787–807, 845–865, 913–933, 938–958, and 1025–1045; these read GGGL…QVAV, LIII…FNIA, VVLV…IVIA, LLLV…NLYL, and YCMN…FFAF. Residues 793–1079 enclose the ABC transmembrane type-1 2 domain; the sequence is FLVMLSSSVL…GVRQTAELEN (287 aa). The ABC transporter 2 domain occupies 1119–1352; the sequence is FKELNLRYTP…SDSKVFHNLV (234 aa). 1153–1160 is a binding site for ATP; it reads GRTGAGKS. Asn1254 and Asn1353 each carry an N-linked (GlcNAc...) asparagine glycan.

It belongs to the ABC transporter superfamily. ABCC family. Conjugate transporter (TC 3.A.1.208) subfamily. Uniform expression in embryos.

The protein localises to the membrane. In terms of biological role, vital for development. The sequence is that of Probable multidrug resistance-associated protein lethal(2)03659 (l(2)03659) from Drosophila melanogaster (Fruit fly).